A 345-amino-acid chain; its full sequence is Skn-1 dependent zygotic transcript 15 protein (345 aa).

One can recognise an F-box domain in the interval 11 to 55 (AFGLHKLPHLVSDKVVKSMVPMELFTYSMVAEETKALVKRLFKKV).

Functionally, may have a role in embryogenesis. This chain is Skn-1 dependent zygotic transcript 15 protein (sdz-15), found in Caenorhabditis elegans.